The primary structure comprises 1408 residues: MKDLFKLLKAQAKTEEFDAIKIALASPDMIRSWSFGEVKKPETINYRTFKPERDGLFCARIFGPVKDYECLCGKYKRLKHRGVICEKCGVEVTQTKVRRERMGHIELASPTAHIWFLKSLPSRIGLLLDMPLRDIERVLYFESYVVVEGGMTYLERNQILTEEQYLDALEEFGDEFDAKMGAEAIHHLLKNMDLEQECEQLREEIVDVSSETKRKKLTKRIKLLESFVHSGNKPEWMILNVLPVLPPDLRPLVPLDGGRFATSDLNDLYRRVINRNNRLKRLLDLSAPDIIVRNEKRMLQEAVDALLDNGRRGRVITSSNKRPLKSLADMIKGKQGRFRQNLLGKRVDYSGRSVITVGPYLRLHQCGLPKKMALELFKPFIYGKLEICGLATTIKAAKKMVEREEAVVWDVLDEVIREHPVMLNRAPTLHRLGIQAFEPVLVEGKAIQLHPLVCAAYNADFDGDQMAVHIPLTLEAQLEARALMMSTNNILSPANGEPIIVPSQDVVLGLYYMTRDRVNSKGEGMILTGPKEAEKIYHAGIAELHARVKVRITEYEKIDDNELVEKKQIIDTTIGRAILWMIVPKGLPFDLVNQVLGKKSISKMLNTCYRILGLKPTVIFADQIMYTGFAYAARSGSSVGIDDMVIPAHKAEIIDDAENEVAEIQEQFQSGLVTAGERYNKVIDIWAAANERVAKAMMDNLSTEVVLNCHGKEELQVSFNNIFMMSDSGARGSAAQIRQLAGMRGLMAKPDGSIIETPITANFREGLNVLQYFISTHGARKGLADTALKTANSGYLTRRLVDVAQDLVVTEEDCGTLSGIVMTPVIEGGDVKESLRERVLGRVTTENILQPGKTDILVKRNTLLNEQWCDILEEHSVDNIKVRSVVTCDADFGVCAYCYGRDLARGHLVNKGEAIGVIAAQSIGEPGTQLTMRTFHIGGAAFRAAAESSIQVKNHGILCLVNAKFVINSANKIVITSRNAELKISDEFGRTKESYKVPYGAIMAKGDGANIISGETIANWDPHTMPVITEVNGFIRFTDMIEGQTIIRQTDELTGLSSIVILDTAERTSSGKDLRPALKIVDANQQDILIPGTDMPAQYFLPGKTIVQLEDGTKITSGDTLARLPQETSGTKDITGGLPRVADLFEARIPKEPAILAEASGIISFGKDTKGKRRLVISSLHSNDSYEEMIPKWRQLNVFEGERVERGDVISDGPESPHDILRLRGVHAVTRYIINEVQDVYRLQGVRINDKHIEVIVRQMLRKATIINAGGSDLLEGEQVEYSRIKIINRQLKSEGRQEITYVRDLLGITKASLATESFISAASFQETTRVLTEASVAGKRDDLRGLKENVIVGRLIPAGTGYAYHQERARYSKHREEALDMQQITAADEASANLAELLNSSLTNHKH.

Zn(2+) contacts are provided by C70, C72, C85, and C88. D460, D462, and D464 together coordinate Mg(2+). Zn(2+) is bound by residues C814, C888, C895, and C898.

Belongs to the RNA polymerase beta' chain family. As to quaternary structure, the RNAP catalytic core consists of 2 alpha, 1 beta, 1 beta' and 1 omega subunit. When a sigma factor is associated with the core the holoenzyme is formed, which can initiate transcription. Mg(2+) serves as cofactor. It depends on Zn(2+) as a cofactor.

It catalyses the reaction RNA(n) + a ribonucleoside 5'-triphosphate = RNA(n+1) + diphosphate. Its function is as follows. DNA-dependent RNA polymerase catalyzes the transcription of DNA into RNA using the four ribonucleoside triphosphates as substrates. In Baumannia cicadellinicola subsp. Homalodisca coagulata, this protein is DNA-directed RNA polymerase subunit beta'.